Here is an 83-residue protein sequence, read N- to C-terminus: Small ribosomal subunit protein eS21 (83 aa).

It belongs to the eukaryotic ribosomal protein eS21 family. In terms of assembly, component of the 40S small ribosomal subunit. Interacts with sta.

The protein localises to the cytoplasm. The protein resides in the cytosol. It localises to the rough endoplasmic reticulum. Its function is as follows. May be an associated component of the ribosome rather than a core structural subunit. May act as a translation initiation factor. Has a role in regulation of cell proliferation in the hematopoietic organs and the imaginal disks of larva. The protein is Small ribosomal subunit protein eS21 (RpS21) of Drosophila ananassae (Fruit fly).